The primary structure comprises 900 residues: Suppressor of activated egl-4 protein 1 (900 aa).

Disordered stretches follow at residues 1-75, 340-380, and 406-425; these read MPPP…HLPT, PVAE…SRKN, and WASTSSADEKMQTERKESLE. Over residues 53–75 the composition is skewed to polar residues; that stretch reads ASGQQHRPSIMSGQSHQNNHLPT. 2 stretches are compositionally biased toward basic and acidic residues: residues 358–377 and 412–425; these read GDMKHLMNGKKRSEDGDGPS and ADEKMQTERKESLE. One can recognise an ELM2 domain in the interval 451–544; it reads PHINLGKNYQ…AAVEDLLRSD (94 aa). One can recognise an SANT domain in the interval 560 to 611; the sequence is NDSVLWTPDEIYQFQDAIYQSEKDFDKVAVELPGKSVKECVQFYYTWKKDCP. Residues 710 to 729 form a disordered region; it reads PTAPRAHHTPSASASKKGAQ. The C2H2-type zinc-finger motif lies at 736–758; sequence FHCRLCDKCFEKVKSLNAHMKSH.

May be a component of a histone deacetylase complex containing saeg-2, saeg-1 and hda-2. May interact with egl-4. Ubiquitously expressed.

Its subcellular location is the nucleus. In terms of biological role, as a likely component of a histone deacetylase complex, together with saeg-2 and hda-2, functions downstream of the cAMP-dependent kinase egl-4 to regulate the expression of genes required for egg-laying and foraging. The protein is Suppressor of activated egl-4 protein 1 of Caenorhabditis elegans.